Here is a 258-residue protein sequence, read N- to C-terminus: MVWCHYILLVLTFFLFTTFFTAACPAIFTWLNSLFRLSNDSPHVVHTSIAEVGDIEDGRVDKDGVLFVDLEFFLGCLPFFFFALVDQSSSSSVCKPLSPSDAKRSSNSLLRLSLVSSNDSDSSVSVSTFAFFFFFLFFLFFVFTCTFSSELTSSTSISISMLRLSSSLSSSEDDSASFLSISASSACNACRSISSFSLTLSSAESNFSRSERLSNPSVMFSSSISFRISSIFFLCSLVFMWFFNCFSDLNVLLQIKHS.

A signal peptide spans 1-23; sequence MVWCHYILLVLTFFLFTTFFTAA. Residues 24–64 are Cytoplasmic-facing; it reads CPAIFTWLNSLFRLSNDSPHVVHTSIAEVGDIEDGRVDKDG. A helical membrane pass occupies residues 65-85; that stretch reads VLFVDLEFFLGCLPFFFFALV. Topologically, residues 86-123 are extracellular; it reads DQSSSSSVCKPLSPSDAKRSSNSLLRLSLVSSNDSDSS. Residue N118 is glycosylated (N-linked (GlcNAc...) asparagine). A helical transmembrane segment spans residues 124 to 144; the sequence is VSVSTFAFFFFFLFFLFFVFT. Over 145–230 the chain is Cytoplasmic; the sequence is CTFSSELTSS…SSSISFRISS (86 aa). A helical membrane pass occupies residues 231–251; that stretch reads IFFLCSLVFMWFFNCFSDLNV. The Extracellular segment spans residues 252-258; sequence LLQIKHS.

It is found in the membrane. This is an uncharacterized protein from Saccharomyces cerevisiae (strain ATCC 204508 / S288c) (Baker's yeast).